The chain runs to 804 residues: Probable exo-1,4-beta-xylosidase xlnD (804 aa).

A signal peptide spans 1-17 (MAVAALALLALLPQALG). Residues Asn20, Asn115, Asn139, Asn234, and Asn243 are each glycosylated (N-linked (GlcNAc...) asparagine). Asp307 is an active-site residue. Asn349, Asn382, Asn404, Asn433, Asn444, Asn485, Asn489, Asn621, Asn652, Asn666, Asn688, and Asn710 each carry an N-linked (GlcNAc...) asparagine glycan.

Belongs to the glycosyl hydrolase 3 family.

It is found in the secreted. It carries out the reaction Hydrolysis of (1-&gt;4)-beta-D-xylans, to remove successive D-xylose residues from the non-reducing termini.. It functions in the pathway glycan degradation; xylan degradation. In terms of biological role, xylan 1,4-beta-xylosidase involved in the hydrolysis of xylan, a major structural heterogeneous polysaccharide found in plant biomass representing the second most abundant polysaccharide in the biosphere, after cellulose. The sequence is that of Probable exo-1,4-beta-xylosidase xlnD (xlnD) from Aspergillus japonicus.